The sequence spans 437 residues: Epsilon-sarcoglycan (437 aa).

Residues 1–317 (MLLFWWWELG…LKSRDYYTDF (317 aa)) lie on the Extracellular side of the membrane. Residue Asn200 is glycosylated (N-linked (GlcNAc...) asparagine). The helical transmembrane segment at 318–338 (LVTLAVPSAVALVLFLILAYI) threads the bilayer. Topologically, residues 339 to 437 (MCCRREGVEK…QQQTTGKWYP (99 aa)) are cytoplasmic.

This sequence belongs to the sarcoglycan alpha/epsilon family. N-glycosylated. Post-translationally, ubiquitinated, leading to its degradation by the proteasome. As to expression, in both neural tissues including cerebellar cortex, striatum, cerebral cortex, thalamus and hippocampus, and non-neural tissues including quadriceps muscle, liver, kidney, spleen, lung, testis and heart. Widely distributed in the brain, with a robust signal obtained from regions with dense neuronal packing such as the pyramidal cell layer of the hippocampus, cerebellar molecular layer, and cerebral cortex. Levels are highest in kidney, moderate in brain and lung, and low in skeletal muscle, liver, spleen and testis.

It localises to the cell membrane. Its subcellular location is the sarcolemma. It is found in the cytoplasm. The protein resides in the cytoskeleton. The protein localises to the cell projection. It localises to the dendrite. Its subcellular location is the golgi apparatus. Its function is as follows. Component of the sarcoglycan complex, a subcomplex of the dystrophin-glycoprotein complex which forms a link between the F-actin cytoskeleton and the extracellular matrix. This is Epsilon-sarcoglycan from Rattus norvegicus (Rat).